The sequence spans 299 residues: tRNA dimethylallyltransferase (299 aa).

An ATP-binding site is contributed by 22 to 29; it reads GPTASGKT. Substrate is bound at residue 24-29; sequence TASGKT. Interaction with substrate tRNA regions lie at residues 47–50 and 172–176; these read DSRQ and QRLLR.

The protein belongs to the IPP transferase family. As to quaternary structure, monomer. The cofactor is Mg(2+).

It catalyses the reaction adenosine(37) in tRNA + dimethylallyl diphosphate = N(6)-dimethylallyladenosine(37) in tRNA + diphosphate. Functionally, catalyzes the transfer of a dimethylallyl group onto the adenine at position 37 in tRNAs that read codons beginning with uridine, leading to the formation of N6-(dimethylallyl)adenosine (i(6)A). This is tRNA dimethylallyltransferase from Endomicrobium trichonymphae.